Consider the following 642-residue polypeptide: Phosphomethylpyrimidine synthase (642 aa).

Residues N235, M264, Y293, H329, 349–351 (SRG), 390–393 (DGLR), and E429 contribute to the substrate site. H433 serves as a coordination point for Zn(2+). Y456 provides a ligand contact to substrate. A Zn(2+)-binding site is contributed by H497. The [4Fe-4S] cluster site is built by C577, C580, and C585.

Belongs to the ThiC family. In terms of assembly, homodimer. [4Fe-4S] cluster is required as a cofactor.

It carries out the reaction 5-amino-1-(5-phospho-beta-D-ribosyl)imidazole + S-adenosyl-L-methionine = 4-amino-2-methyl-5-(phosphooxymethyl)pyrimidine + CO + 5'-deoxyadenosine + formate + L-methionine + 3 H(+). Its pathway is cofactor biosynthesis; thiamine diphosphate biosynthesis. Functionally, catalyzes the synthesis of the hydroxymethylpyrimidine phosphate (HMP-P) moiety of thiamine from aminoimidazole ribotide (AIR) in a radical S-adenosyl-L-methionine (SAM)-dependent reaction. This is Phosphomethylpyrimidine synthase from Alteromonas mediterranea (strain DSM 17117 / CIP 110805 / LMG 28347 / Deep ecotype).